The sequence spans 470 residues: Uronate isomerase (470 aa).

It belongs to the metallo-dependent hydrolases superfamily. Uronate isomerase family.

It carries out the reaction D-glucuronate = D-fructuronate. The catalysed reaction is aldehydo-D-galacturonate = keto-D-tagaturonate. The protein operates within carbohydrate metabolism; pentose and glucuronate interconversion. This is Uronate isomerase from Escherichia coli O17:K52:H18 (strain UMN026 / ExPEC).